A 429-amino-acid chain; its full sequence is Mannose-6-phosphate isomerase (429 aa).

Q110, H112, E137, and H282 together coordinate Zn(2+). Residue R301 is part of the active site.

The protein belongs to the mannose-6-phosphate isomerase type 1 family. Zn(2+) is required as a cofactor.

It is found in the cytoplasm. It carries out the reaction D-mannose 6-phosphate = D-fructose 6-phosphate. Its pathway is nucleotide-sugar biosynthesis; GDP-alpha-D-mannose biosynthesis; alpha-D-mannose 1-phosphate from D-fructose 6-phosphate: step 1/2. Its function is as follows. Involved in the synthesis of the GDP-mannose and dolichol-phosphate-mannose required for a number of critical mannosyl transfer reactions. This chain is Mannose-6-phosphate isomerase (PMI1), found in Candida glabrata (strain ATCC 2001 / BCRC 20586 / JCM 3761 / NBRC 0622 / NRRL Y-65 / CBS 138) (Yeast).